An 851-amino-acid polypeptide reads, in one-letter code: DNA mismatch repair protein MutS (851 aa).

Position 602–609 (Gly602–Ser609) interacts with ATP.

The protein belongs to the DNA mismatch repair MutS family.

In terms of biological role, this protein is involved in the repair of mismatches in DNA. It is possible that it carries out the mismatch recognition step. This protein has a weak ATPase activity. The protein is DNA mismatch repair protein MutS of Streptococcus pyogenes serotype M2 (strain MGAS10270).